A 138-amino-acid chain; its full sequence is Basic phospholipase A2 Drk-b1 (138 aa).

Positions 1-16 (MRTLWIVAMCLIGVEG) are cleaved as a signal peptide. 7 disulfide bridges follow: cysteine 42–cysteine 131, cysteine 44–cysteine 60, cysteine 59–cysteine 111, cysteine 65–cysteine 138, cysteine 66–cysteine 104, cysteine 73–cysteine 97, and cysteine 91–cysteine 102. Ca(2+) contacts are provided by tyrosine 43, glycine 45, and glycine 47. Histidine 63 is an active-site residue. Aspartate 64 contributes to the Ca(2+) binding site. The active site involves aspartate 105.

Ca(2+) is required as a cofactor. Expressed by the venom gland.

It localises to the secreted. The catalysed reaction is a 1,2-diacyl-sn-glycero-3-phosphocholine + H2O = a 1-acyl-sn-glycero-3-phosphocholine + a fatty acid + H(+). In terms of biological role, exhibits high hydrolytic activities and shows strong preference for the anionic micelles (dPPC with deoxycholate) to the zwitterionic micelles (dPPC with Triton X-100). PLA2 catalyzes the calcium-dependent hydrolysis of the 2-acyl groups in 3-sn-phosphoglycerides. This Daboia russelii (Russel's viper) protein is Basic phospholipase A2 Drk-b1.